The following is a 426-amino-acid chain: Serine--tRNA ligase (426 aa).

233-235 (TAE) contributes to the L-serine binding site. 264 to 266 (RSE) is a binding site for ATP. Glu287 is an L-serine binding site. An ATP-binding site is contributed by 351-354 (EISS). Ser387 is an L-serine binding site.

It belongs to the class-II aminoacyl-tRNA synthetase family. Type-1 seryl-tRNA synthetase subfamily. As to quaternary structure, homodimer. The tRNA molecule binds across the dimer.

Its subcellular location is the cytoplasm. The catalysed reaction is tRNA(Ser) + L-serine + ATP = L-seryl-tRNA(Ser) + AMP + diphosphate + H(+). The enzyme catalyses tRNA(Sec) + L-serine + ATP = L-seryl-tRNA(Sec) + AMP + diphosphate + H(+). It functions in the pathway aminoacyl-tRNA biosynthesis; selenocysteinyl-tRNA(Sec) biosynthesis; L-seryl-tRNA(Sec) from L-serine and tRNA(Sec): step 1/1. Functionally, catalyzes the attachment of serine to tRNA(Ser). Is also able to aminoacylate tRNA(Sec) with serine, to form the misacylated tRNA L-seryl-tRNA(Sec), which will be further converted into selenocysteinyl-tRNA(Sec). This Clostridium botulinum (strain Kyoto / Type A2) protein is Serine--tRNA ligase.